A 230-amino-acid chain; its full sequence is CASP-like protein 2A2 (230 aa).

Residues 1 to 23 form a disordered region; it reads MEKKDEGNPPMAVMGSRDENEDV. The Cytoplasmic segment spans residues 1–29; sequence MEKKDEGNPPMAVMGSRDENEDVKSTMRT. Residues 30 to 50 traverse the membrane as a helical segment; the sequence is AETMLRLVPVALCVSALVVML. The Extracellular portion of the chain corresponds to 51-71; the sequence is KNTQTNDYGSLSYSDLGAFRY. A helical membrane pass occupies residues 72–92; sequence LVNANGICAGYSLLSAVIVAM. Residues 93-100 are Cytoplasmic-facing; sequence PRAWTMPQ. The helical transmembrane segment at 101–121 threads the bilayer; it reads AWTFFLLDQVLTYVILAAGTV. Residues 122–151 lie on the Extracellular side of the membrane; the sequence is STEVLYLANKGDTSIAWSAACASFGGFCHK. The helical transmembrane segment at 152-172 threads the bilayer; it reads ALISTVITFVAVIFYAALSLV. At 173–230 the chain is on the cytoplasmic side; sequence SSYKLFSKYDAPVVTQSGEGIKTVTLGSPPPPPPPPPSNLHLHLHAKLACPAHNNSPN.

It belongs to the Casparian strip membrane proteins (CASP) family. As to quaternary structure, homodimer and heterodimers.

The protein resides in the cell membrane. The protein is CASP-like protein 2A2 of Populus trichocarpa (Western balsam poplar).